Reading from the N-terminus, the 572-residue chain is Glypican-5 (572 aa).

The first 24 residues, 1-24, serve as a signal peptide directing secretion; the sequence is MDARTWRLGWRCLLLLALLGSTRS. Residues Asn-120 and Asn-237 are each glycosylated (N-linked (GlcNAc...) asparagine). Residue Ser-486 is glycosylated (O-linked (Xyl...) (glycosaminoglycan) serine). Asn-493 carries an N-linked (GlcNAc...) asparagine glycan. 3 O-linked (Xyl...) (glycosaminoglycan) serine glycosylation sites follow: Ser-495, Ser-507, and Ser-509. The N-linked (GlcNAc...) asparagine glycan is linked to Asn-527.

Belongs to the glypican family.

The protein resides in the cell membrane. The protein localises to the secreted. Its subcellular location is the extracellular space. In terms of biological role, cell surface proteoglycan that bears heparan sulfate. This is Glypican-5 (Gpc5) from Mus musculus (Mouse).